The sequence spans 408 residues: Peptidase T (408 aa).

Position 81 (histidine 81) interacts with Zn(2+). Aspartate 83 is an active-site residue. Aspartate 142 provides a ligand contact to Zn(2+). Residue glutamate 176 is the Proton acceptor of the active site. Zn(2+) contacts are provided by glutamate 177, aspartate 199, and histidine 381.

This sequence belongs to the peptidase M20B family. Requires Zn(2+) as cofactor.

The protein resides in the cytoplasm. It carries out the reaction Release of the N-terminal residue from a tripeptide.. Functionally, cleaves the N-terminal amino acid of tripeptides. This Streptococcus gordonii (strain Challis / ATCC 35105 / BCRC 15272 / CH1 / DL1 / V288) protein is Peptidase T.